Consider the following 262-residue polypeptide: Aquaporin TIP3-1 (262 aa).

Transmembrane regions (helical) follow at residues 27 to 47 (AAIS…GSVL) and 61 to 81 (GLVA…AVAV). The short motif at 89–91 (NPA) is the NPA 1 element. A run of 3 helical transmembrane segments spans residues 104–124 (LVRA…ATLL), 148–168 (AVLL…ATVI), and 175–195 (VGTI…LAGG). The NPA 2 motif lies at 203-205 (NPA). Residues 223–243 (YWLGPFLGAGLAGLVYEYLVI) traverse the membrane as a helical segment.

This sequence belongs to the MIP/aquaporin (TC 1.A.8) family. TIP (TC 1.A.8.10) subfamily.

The protein resides in the vacuole membrane. In terms of biological role, aquaporins facilitate the transport of water and small neutral solutes across cell membranes. The chain is Aquaporin TIP3-1 (TIP3-1) from Zea mays (Maize).